The sequence spans 108 residues: U3-lycotoxin-Ls1w (108 aa).

The signal sequence occupies residues 1 to 20 (MKFVLLFGVLLVTLFSYSSA). Positions 21–44 (EMLDDFDQADEDELLSLIEKEEAR) are excised as a propeptide. 4 disulfide bridges follow: Cys48–Cys63, Cys55–Cys72, Cys62–Cys87, and Cys74–Cys85.

It belongs to the neurotoxin 19 (CSTX) family. 01 subfamily. Expressed by the venom gland.

The protein localises to the secreted. This chain is U3-lycotoxin-Ls1w, found in Lycosa singoriensis (Wolf spider).